A 319-amino-acid chain; its full sequence is Biotin synthase (319 aa).

The 230-residue stretch at 44-273 (IHGDGIDLCS…EAKIRLAGGR (230 aa)) folds into the Radical SAM core domain. [4Fe-4S] cluster contacts are provided by Cys62, Cys66, and Cys69. Residues Ser106, Cys138, Cys198, and Arg268 each contribute to the [2Fe-2S] cluster site.

Belongs to the radical SAM superfamily. Biotin synthase family. In terms of assembly, homodimer. The cofactor is [4Fe-4S] cluster. [2Fe-2S] cluster is required as a cofactor.

The catalysed reaction is (4R,5S)-dethiobiotin + (sulfur carrier)-SH + 2 reduced [2Fe-2S]-[ferredoxin] + 2 S-adenosyl-L-methionine = (sulfur carrier)-H + biotin + 2 5'-deoxyadenosine + 2 L-methionine + 2 oxidized [2Fe-2S]-[ferredoxin]. The protein operates within cofactor biosynthesis; biotin biosynthesis; biotin from 7,8-diaminononanoate: step 2/2. Its function is as follows. Catalyzes the conversion of dethiobiotin (DTB) to biotin by the insertion of a sulfur atom into dethiobiotin via a radical-based mechanism. The polypeptide is Biotin synthase (Clostridium perfringens (strain 13 / Type A)).